The sequence spans 85 residues: uncharacterized protein (85 aa).

Residues 64 to 76 (DPPVRRSGGREQH) show a composition bias toward basic and acidic residues. Residues 64–85 (DPPVRRSGGREQHLAQVWRATS) form a disordered region.

This is an uncharacterized protein from Mycobacterium bovis (strain ATCC BAA-935 / AF2122/97).